Consider the following 451-residue polypeptide: Phosphoglucosamine mutase (451 aa).

Serine 103 acts as the Phosphoserine intermediate in catalysis. Mg(2+) contacts are provided by serine 103, aspartate 243, aspartate 245, and aspartate 247. Residue serine 103 is modified to Phosphoserine.

It belongs to the phosphohexose mutase family. It depends on Mg(2+) as a cofactor. Activated by phosphorylation.

It catalyses the reaction alpha-D-glucosamine 1-phosphate = D-glucosamine 6-phosphate. Its function is as follows. Catalyzes the conversion of glucosamine-6-phosphate to glucosamine-1-phosphate. The polypeptide is Phosphoglucosamine mutase (Lactobacillus gasseri (strain ATCC 33323 / DSM 20243 / BCRC 14619 / CIP 102991 / JCM 1131 / KCTC 3163 / NCIMB 11718 / NCTC 13722 / AM63)).